We begin with the raw amino-acid sequence, 102 residues long: NADH-quinone oxidoreductase subunit K (102 aa).

The next 3 helical transmembrane spans lie at 6-26, 30-50, and 62-82; these read LEHGLAVAGVLFCLGLVGLMV, ILFVLMSLEIMMNAAALAFVV, and VMFILVISLAAAEASIGLAIL.

Belongs to the complex I subunit 4L family. As to quaternary structure, NDH-1 is composed of 13 different subunits. Subunits NuoA, H, J, K, L, M, N constitute the membrane sector of the complex.

The protein localises to the cell inner membrane. It catalyses the reaction a quinone + NADH + 5 H(+)(in) = a quinol + NAD(+) + 4 H(+)(out). In terms of biological role, NDH-1 shuttles electrons from NADH, via FMN and iron-sulfur (Fe-S) centers, to quinones in the respiratory chain. The immediate electron acceptor for the enzyme in this species is believed to be ubiquinone. Couples the redox reaction to proton translocation (for every two electrons transferred, four hydrogen ions are translocated across the cytoplasmic membrane), and thus conserves the redox energy in a proton gradient. The polypeptide is NADH-quinone oxidoreductase subunit K (Pseudomonas syringae pv. syringae (strain B728a)).